The following is a 219-amino-acid chain: 2-hydroxy-3-keto-5-methylthiopentenyl-1-phosphate phosphatase (219 aa).

Belongs to the HAD-like hydrolase superfamily. MtnX family.

It carries out the reaction 2-hydroxy-5-methylsulfanyl-3-oxopent-1-enyl phosphate + H2O = 1,2-dihydroxy-5-(methylsulfanyl)pent-1-en-3-one + phosphate. It functions in the pathway amino-acid biosynthesis; L-methionine biosynthesis via salvage pathway; L-methionine from S-methyl-5-thio-alpha-D-ribose 1-phosphate: step 4/6. Functionally, dephosphorylates 2-hydroxy-3-keto-5-methylthiopentenyl-1-phosphate (HK-MTPenyl-1-P) yielding 1,2-dihydroxy-3-keto-5-methylthiopentene (DHK-MTPene). The protein is 2-hydroxy-3-keto-5-methylthiopentenyl-1-phosphate phosphatase of Bacillus mycoides (strain KBAB4) (Bacillus weihenstephanensis).